The chain runs to 68 residues: Amphipathic peptide CT1 (68 aa).

Residues 1-23 (MKTQIVILIVAVLFLQLVSQSDA) form the signal peptide. Leu36 carries the post-translational modification Leucine amide. Residues 40-68 (GLKNLDQYNDLFDGEISDADIKFLKDLMR) constitute a propeptide that is removed on maturation.

The protein belongs to the non-disulfide-bridged peptide (NDBP) superfamily. Short antimicrobial peptide (group 4) family. In terms of tissue distribution, expressed by the venom gland.

It localises to the secreted. Its subcellular location is the target cell membrane. Its function is as follows. Amphipathic peptide that shows no antibacterial activity even at 50 uM but shows a low hemolytic activity against human erythrocytes. This chain is Amphipathic peptide CT1, found in Mesomexovis subcristatus (Scorpion).